A 662-amino-acid chain; its full sequence is High affinity sulfate transporter 2 (662 aa).

The disordered stretch occupies residues 1–35; it reads MSQRVSDQAMAEVIAETRTNSSSRRHGGGDDTPSL. 12 helical membrane passes run 103–123, 128–148, 153–173, 182–202, 205–225, 264–284, 291–311, 346–366, 383–403, 420–440, 447–467, and 481–501; these read GDFIAGLTIASLCIPQDLAYA, LDPWYGLYSSFVAPLVYAFMG, IAIGPVAVVSLLLGTLLSNEI, LRLAFTATFFAGVTQMLLGVC, GFLIDFLSHAAIVGFMAGAAI, WETILIGLSFLIFLLITKYIA, FWVSAISPMICVIVSTFFVYI, AGVRVGVVAGLVALTEAMAIG, MVAMGTMNIVGSLTSCYVTTG, VSNIVMAIVVLLTLLVITPLF, VLASIIIAAVVNLVNIEAMVL, and GAFFGVIFKSVEIGLLIAVAI. An STAS domain is found at 532–655; the sequence is QYPKAEQIPG…LTVADAVATY (124 aa).

It belongs to the SLC26A/SulP transporter (TC 2.A.53) family.

It localises to the membrane. High-affinity H(+)/sulfate cotransporter that mediates the uptake of sulfate by plant roots from low concentrations of sulfate in the soil solution. In Stylosanthes hamata (Caribbean stylo), this protein is High affinity sulfate transporter 2 (ST2).